The chain runs to 221 residues: Hypoxanthine-guanine phosphoribosyltransferase (221 aa).

Ser-2 is modified (N-acetylserine). GMP is bound by residues Lys-85, 110 to 118 (DEVDDTRTT), Lys-159, and 188 to 194 (WYAYPWE). Catalysis depends on Asp-114, which acts as the Proton acceptor.

This sequence belongs to the purine/pyrimidine phosphoribosyltransferase family. In terms of assembly, dimer. Requires Mg(2+) as cofactor.

Its subcellular location is the cytoplasm. It is found in the nucleus. It carries out the reaction IMP + diphosphate = hypoxanthine + 5-phospho-alpha-D-ribose 1-diphosphate. The catalysed reaction is GMP + diphosphate = guanine + 5-phospho-alpha-D-ribose 1-diphosphate. The protein operates within purine metabolism; IMP biosynthesis via salvage pathway; IMP from hypoxanthine: step 1/1. Its activity is regulated as follows. Subject to feedback inhibition by GMP. Functionally, converts guanine to guanosine monophosphate, and hypoxanthine to inosine monophosphate. Transfers the 5-phosphoribosyl group from 5-phosphoribosylpyrophosphate onto the purine. Plays a central role in the generation of purine nucleotides through the purine salvage pathway. The protein is Hypoxanthine-guanine phosphoribosyltransferase (HPT1) of Saccharomyces cerevisiae (strain ATCC 204508 / S288c) (Baker's yeast).